The chain runs to 320 residues: Malate dehydrogenase (320 aa).

Residues 10–15 and D34 each bind NAD(+); that span reads GSGMIG. The substrate site is built by R83 and R89. Residues N96 and 119–121 each bind NAD(+); that span reads ITN. N121 and R152 together coordinate substrate. H176 acts as the Proton acceptor in catalysis.

Belongs to the LDH/MDH superfamily. MDH type 3 family.

The catalysed reaction is (S)-malate + NAD(+) = oxaloacetate + NADH + H(+). In terms of biological role, catalyzes the reversible oxidation of malate to oxaloacetate. This Rhizobium johnstonii (strain DSM 114642 / LMG 32736 / 3841) (Rhizobium leguminosarum bv. viciae) protein is Malate dehydrogenase.